The sequence spans 398 residues: Sphingosine 1-phosphate receptor 5 (398 aa).

At 1-40 (MEPGLLRPAPVSEVIVLHYNYTGKLRGARYQPGAGLRADA) the chain is on the extracellular side. The N-linked (GlcNAc...) asparagine glycan is linked to Asn20. Residues 41–61 (VVCLAVCALIVLENLAVLVVL) form a helical membrane-spanning segment. Over 62–70 (GRHPRFHAP) the chain is Cytoplasmic. Residues 71–91 (MFLLLGSLTLSDLLAGAAYAA) traverse the membrane as a helical segment. Over 92-111 (NILLSGPLTLRLSPALWFAR) the chain is Extracellular. A helical transmembrane segment spans residues 112–132 (EGGVFVALAASVLSLLAIALE). Topologically, residues 133–151 (RLLTMERRGPAPAARRGRT) are cytoplasmic. The chain crosses the membrane as a helical span at residues 152–172 (LALAAGAWGVSLLLGLLPALG). Topologically, residues 173–191 (WNCLGRLEACSTVLPLYAK) are extracellular. The helical transmembrane segment at 192–212 (AYVLFCVLAFVGILAAICGLY) threads the bilayer. The Cytoplasmic portion of the chain corresponds to 213–252 (ARIYCQVRAKAQRLRARPGAGEGTSARARGTPRSLALLRT). The chain crosses the membrane as a helical span at residues 253-273 (LSVVLVAFVACWGPLFLLLLL). At 274–287 (DVACPARACPVLLQ) the chain is on the extracellular side. A helical transmembrane segment spans residues 288–308 (ADPFLGLAMANSLLNPIIYTF). Topologically, residues 309-398 (TNRDLRHALL…QTLVPPPAAD (90 aa)) are cytoplasmic. Cys323 is lipidated: S-palmitoyl cysteine. Residues 332 to 398 (SGTSRSPGST…QTLVPPPAAD (67 aa)) form a disordered region. The segment covering 334-343 (TSRSPGSTLG) has biased composition (low complexity). Ser337 carries the post-translational modification Phosphoserine. Over residues 359 to 373 (SSSRSERSSPQRDGL) the composition is skewed to basic and acidic residues. Ser381 carries the phosphoserine modification.

Belongs to the G-protein coupled receptor 1 family.

Its subcellular location is the cell membrane. Functionally, receptor for the lysosphingolipid sphingosine 1-phosphate (S1P). S1P is a bioactive lysophospholipid that elicits diverse physiological effect on most types of cells and tissues. Is coupled to both the G(i/O)alpha and G(12) subclass of heteromeric G-proteins. The polypeptide is Sphingosine 1-phosphate receptor 5 (S1PR5) (Sus scrofa (Pig)).